Here is a 127-residue protein sequence, read N- to C-terminus: Putative platinum sensitivity protein 1 (127 aa).

This Saccharomyces cerevisiae (strain ATCC 204508 / S288c) (Baker's yeast) protein is Putative platinum sensitivity protein 1 (PSY1).